We begin with the raw amino-acid sequence, 398 residues long: Enoyl-[acyl-carrier-protein] reductase [NADH] (398 aa).

NAD(+) is bound by residues 48–53 (GASTGY), 74–75 (FE), 111–112 (DA), and 139–140 (LA). Y225 serves as a coordination point for substrate. Y235 serves as the catalytic Proton donor. NAD(+)-binding positions include K244 and 273–275 (VVT).

The protein belongs to the TER reductase family. Monomer.

It carries out the reaction a 2,3-saturated acyl-[ACP] + NAD(+) = a (2E)-enoyl-[ACP] + NADH + H(+). It participates in lipid metabolism; fatty acid biosynthesis. Involved in the final reduction of the elongation cycle of fatty acid synthesis (FAS II). Catalyzes the reduction of a carbon-carbon double bond in an enoyl moiety that is covalently linked to an acyl carrier protein (ACP). The polypeptide is Enoyl-[acyl-carrier-protein] reductase [NADH] (Pseudomonas fluorescens (strain ATCC BAA-477 / NRRL B-23932 / Pf-5)).